The primary structure comprises 146 residues: Hemoglobin subunit beta-1 (146 aa).

A Globin domain is found at 2–146; it reads EWTDAEKSTI…VVAAMGSRYF (145 aa). Heme b is bound by residues histidine 63 and histidine 92.

Belongs to the globin family. As to quaternary structure, heterotetramer of two alpha chains and two beta chains. In terms of tissue distribution, red blood cells.

In terms of biological role, involved in oxygen transport from gills to the various peripheral tissues. The sequence is that of Hemoglobin subunit beta-1 (hbb1) from Oncorhynchus mykiss (Rainbow trout).